The chain runs to 402 residues: Arginine biosynthesis bifunctional protein ArgJ (402 aa).

Residues Thr149, Lys175, Thr186, Glu266, Asn397, and Thr402 each coordinate substrate. The active-site Nucleophile is the Thr186.

Belongs to the ArgJ family. In terms of assembly, heterotetramer of two alpha and two beta chains.

The protein resides in the cytoplasm. It catalyses the reaction N(2)-acetyl-L-ornithine + L-glutamate = N-acetyl-L-glutamate + L-ornithine. It carries out the reaction L-glutamate + acetyl-CoA = N-acetyl-L-glutamate + CoA + H(+). The protein operates within amino-acid biosynthesis; L-arginine biosynthesis; L-ornithine and N-acetyl-L-glutamate from L-glutamate and N(2)-acetyl-L-ornithine (cyclic): step 1/1. Its pathway is amino-acid biosynthesis; L-arginine biosynthesis; N(2)-acetyl-L-ornithine from L-glutamate: step 1/4. In terms of biological role, catalyzes two activities which are involved in the cyclic version of arginine biosynthesis: the synthesis of N-acetylglutamate from glutamate and acetyl-CoA as the acetyl donor, and of ornithine by transacetylation between N(2)-acetylornithine and glutamate. The sequence is that of Arginine biosynthesis bifunctional protein ArgJ from Prochlorococcus marinus subsp. pastoris (strain CCMP1986 / NIES-2087 / MED4).